The following is a 757-amino-acid chain: uncharacterized protein (757 aa).

Residues 640 to 709 (GMILEGVVSN…ARKRIALTMR (70 aa)) enclose the S1 motif domain. The segment covering 711–741 (DDEPGGAKHKMPSENRSRERTAGRKPQRNDR) has biased composition (basic and acidic residues). Residues 711-757 (DDEPGGAKHKMPSENRSRERTAGRKPQRNDRAPANSAMADAFAKLKR) form a disordered region.

This is an uncharacterized protein from Neisseria meningitidis serogroup B (strain ATCC BAA-335 / MC58).